Here is a 270-residue protein sequence, read N- to C-terminus: Thymidine kinase 2, mitochondrial (270 aa).

The transit peptide at 1 to 38 (MLLRSLRSWAARSPRSVGPGSSGSPGSLDSGAGPLWAP) directs the protein to the mitochondrion. A disordered region spans residues 1 to 54 (MLLRSLRSWAARSPRSVGPGSSGSPGSLDSGAGPLWAPRRAWPPDKDRENDKEK). The span at 13-34 (SPRSVGPGSSGSPGSLDSGAGP) shows a compositional bias: low complexity. Basic and acidic residues predominate over residues 42-54 (WPPDKDRENDKEK). Position 62-70 (62-70 (GNIASGKTT)) interacts with ATP. Residue E138 is the Proton acceptor of the active site.

Belongs to the DCK/DGK family. As to quaternary structure, homodimer. Found in most tissues; highly expressed in liver.

It is found in the mitochondrion. It catalyses the reaction thymidine + ATP = dTMP + ADP + H(+). The enzyme catalyses 2'-deoxycytidine + ATP = dCMP + ADP + H(+). The catalysed reaction is 2'-deoxyuridine + ATP = dUMP + ADP + H(+). Functionally, phosphorylates thymidine, deoxycytidine, and deoxyuridine in the mitochondrial matrix. In non-replicating cells, where cytosolic dNTP synthesis is down-regulated, mtDNA synthesis depends solely on TK2 and DGUOK. The sequence is that of Thymidine kinase 2, mitochondrial (Tk2) from Mus musculus (Mouse).